Reading from the N-terminus, the 338-residue chain is Ketol-acid reductoisomerase (NADP(+)) (338 aa).

The region spanning 1-181 (MNVYYDKDCD…GGGRSGIIET (181 aa)) is the KARI N-terminal Rossmann domain. NADP(+) is bound by residues 24–27 (YGSQ), Arg-47, Ser-50, Ser-52, and 82–85 (DEFQ). Residue His-107 is part of the active site. Gly-133 contacts NADP(+). The KARI C-terminal knotted domain occupies 182 to 327 (TFKDETETDL…AKLRGMMPWI (146 aa)). Mg(2+) is bound by residues Asp-190, Glu-194, Glu-226, and Glu-230. Position 251 (Ser-251) interacts with substrate.

This sequence belongs to the ketol-acid reductoisomerase family. Requires Mg(2+) as cofactor.

The catalysed reaction is (2R)-2,3-dihydroxy-3-methylbutanoate + NADP(+) = (2S)-2-acetolactate + NADPH + H(+). It carries out the reaction (2R,3R)-2,3-dihydroxy-3-methylpentanoate + NADP(+) = (S)-2-ethyl-2-hydroxy-3-oxobutanoate + NADPH + H(+). The protein operates within amino-acid biosynthesis; L-isoleucine biosynthesis; L-isoleucine from 2-oxobutanoate: step 2/4. It functions in the pathway amino-acid biosynthesis; L-valine biosynthesis; L-valine from pyruvate: step 2/4. In terms of biological role, involved in the biosynthesis of branched-chain amino acids (BCAA). Catalyzes an alkyl-migration followed by a ketol-acid reduction of (S)-2-acetolactate (S2AL) to yield (R)-2,3-dihydroxy-isovalerate. In the isomerase reaction, S2AL is rearranged via a Mg-dependent methyl migration to produce 3-hydroxy-3-methyl-2-ketobutyrate (HMKB). In the reductase reaction, this 2-ketoacid undergoes a metal-dependent reduction by NADPH to yield (R)-2,3-dihydroxy-isovalerate. The polypeptide is Ketol-acid reductoisomerase (NADP(+)) (Psychrobacter cryohalolentis (strain ATCC BAA-1226 / DSM 17306 / VKM B-2378 / K5)).